The primary structure comprises 343 residues: Protein RecA (343 aa).

An ATP-binding site is contributed by 66–73; that stretch reads GPESSGKT.

The protein belongs to the RecA family.

It localises to the cytoplasm. Its function is as follows. Can catalyze the hydrolysis of ATP in the presence of single-stranded DNA, the ATP-dependent uptake of single-stranded DNA by duplex DNA, and the ATP-dependent hybridization of homologous single-stranded DNAs. It interacts with LexA causing its activation and leading to its autocatalytic cleavage. This Rickettsia massiliae (strain Mtu5) protein is Protein RecA.